The following is a 133-amino-acid chain: Small ribosomal subunit protein uS8 (133 aa).

Belongs to the universal ribosomal protein uS8 family. As to quaternary structure, part of the 30S ribosomal subunit. Contacts proteins S5 and S12.

Its function is as follows. One of the primary rRNA binding proteins, it binds directly to 16S rRNA central domain where it helps coordinate assembly of the platform of the 30S subunit. The polypeptide is Small ribosomal subunit protein uS8 (Prochlorococcus marinus (strain MIT 9313)).